Consider the following 312-residue polypeptide: Ribosomal protein L11 methyltransferase (312 aa).

The S-adenosyl-L-methionine site is built by Thr-162, Gly-183, Asp-205, and Asn-248.

This sequence belongs to the methyltransferase superfamily. PrmA family.

It is found in the cytoplasm. The catalysed reaction is L-lysyl-[protein] + 3 S-adenosyl-L-methionine = N(6),N(6),N(6)-trimethyl-L-lysyl-[protein] + 3 S-adenosyl-L-homocysteine + 3 H(+). Its function is as follows. Methylates ribosomal protein L11. This is Ribosomal protein L11 methyltransferase from Bacillus cereus (strain G9842).